The following is a 644-amino-acid chain: ATP-dependent zinc metalloprotease FtsH (644 aa).

Residues 1-13 lie on the Cytoplasmic side of the membrane; the sequence is MANNDNKHRRSMS. A helical membrane pass occupies residues 14-34; sequence MLLYIAVAIFVYLLLSNTLLP. The Extracellular segment spans residues 35–117; it reads GLLRQQIQTV…SIPDNSANML (83 aa). The chain crosses the membrane as a helical span at residues 118–138; the sequence is MYALIQYGIPLIIFLGIGFFI. Over 139 to 644 the chain is Cytoplasmic; the sequence is NRSLKRAMGD…DEGSSTPSEE (506 aa). Position 224 to 231 (224 to 231) interacts with ATP; the sequence is GPPGTGKT. His-445 lines the Zn(2+) pocket. Glu-446 is an active-site residue. The Zn(2+) site is built by His-449 and Asp-522.

This sequence in the central section; belongs to the AAA ATPase family. It in the C-terminal section; belongs to the peptidase M41 family. As to quaternary structure, homohexamer. It depends on Zn(2+) as a cofactor.

The protein resides in the cell membrane. Its function is as follows. Acts as a processive, ATP-dependent zinc metallopeptidase for both cytoplasmic and membrane proteins. Plays a role in the quality control of integral membrane proteins. The polypeptide is ATP-dependent zinc metalloprotease FtsH (Lancefieldella parvula (strain ATCC 33793 / DSM 20469 / CCUG 32760 / JCM 10300 / KCTC 3663 / VPI 0546 / 1246) (Atopobium parvulum)).